The chain runs to 630 residues: A disintegrin and metalloproteinase with thrombospondin motifs 4 (630 aa).

A propeptide spanning residues 1-5 is cleaved from the precursor; the sequence is RRTKR. Residues 11–221 enclose the Peptidase M12B domain; it reads RFVETLVVAD…GYGHCLLDKP (211 aa). Disulfide bonds link C86/C138, C115/C120, C132/C216, C170/C200, C242/C265, C253/C275, C260/C294, C288/C299, C325/C362, C329/C367, and C340/C352. N-linked (GlcNAc...) asparagine glycosylation is present at N96. Residue H154 participates in Zn(2+) binding. E155 is an active-site residue. The Zn(2+) site is built by H158 and H164. The Disintegrin domain occupies 233-303; the sequence is GKDYDADRQC…CMGGRCLHVD (71 aa). Positions 313 to 368 constitute a TSP type-1 domain; it reads AGGWGPWGPWGDCSRTCGGGVQFSSRDCTKPVPRNGGKYCEGRRTPFRSCNTKNCP. N474 is a glycosylation site (N-linked (GlcNAc...) asparagine). A spacer region spans residues 479-630; that stretch reads SKQSGSFKKF…LRKRTWAGRK (152 aa).

In terms of assembly, interacts with SRPX2. Requires Zn(2+) as cofactor. The precursor is cleaved by a furin endopeptidase. Post-translationally, glycosylated. Can be O-fucosylated by POFUT2 on a serine or a threonine residue found within the consensus sequence C1-X(2)-(S/T)-C2-G of the TSP type-1 repeat domains where C1 and C2 are the first and second cysteine residue of the repeat, respectively. Fucosylated repeats can then be further glycosylated by the addition of a beta-1,3-glucose residue by the glucosyltransferase, B3GALTL. Fucosylation mediates the efficient secretion of ADAMTS family members. Can also be C-glycosylated with one or two mannose molecules on tryptophan residues within the consensus sequence W-X-X-W of the TPRs, and N-glycosylated. These other glycosylations can also facilitate secretion. In terms of tissue distribution, brain specific.

Its subcellular location is the secreted. The protein resides in the extracellular space. It is found in the extracellular matrix. It catalyses the reaction Glutamyl endopeptidase. Bonds cleaved include 370-Thr-Glu-Gly-Glu-|-Ala-Arg-Gly-Ser-377 in the interglobular domain of mammalian aggrecan.. Cleaves aggrecan, a cartilage proteoglycan, at the '392-Glu-|-Ala-393' site and may be involved in its turnover. Also cleaves COMP. May play an important role in the destruction of aggrecan in arthritic diseases. The polypeptide is A disintegrin and metalloproteinase with thrombospondin motifs 4 (Adamts4) (Rattus norvegicus (Rat)).